A 170-amino-acid polypeptide reads, in one-letter code: Ribosome maturation factor RimM (170 aa).

The region spanning 97-170 (KNEFYWTDLI…QIRVEWGSDW (74 aa)) is the PRC barrel domain.

Belongs to the RimM family. Binds ribosomal protein uS19.

The protein localises to the cytoplasm. An accessory protein needed during the final step in the assembly of 30S ribosomal subunit, possibly for assembly of the head region. Essential for efficient processing of 16S rRNA. May be needed both before and after RbfA during the maturation of 16S rRNA. It has affinity for free ribosomal 30S subunits but not for 70S ribosomes. The polypeptide is Ribosome maturation factor RimM (Dechloromonas aromatica (strain RCB)).